The chain runs to 92 residues: Probable Fe(2+)-trafficking protein (92 aa).

This sequence belongs to the Fe(2+)-trafficking protein family.

Could be a mediator in iron transactions between iron acquisition and iron-requiring processes, such as synthesis and/or repair of Fe-S clusters in biosynthetic enzymes. This chain is Probable Fe(2+)-trafficking protein, found in Shewanella baltica (strain OS223).